Reading from the N-terminus, the 112-residue chain is UPF0145 protein LAF_1635 (112 aa).

The protein belongs to the UPF0145 family.

In Limosilactobacillus fermentum (strain NBRC 3956 / LMG 18251) (Lactobacillus fermentum), this protein is UPF0145 protein LAF_1635.